The sequence spans 503 residues: MSKVIGKVSQIIGPVVDVVFNGKDVELPKIYDSLEITKKDGTLLVLEVQSHIGENTVRTISMDSTDGLSRGYEVVGTGNPIKMPIGADVYGRLFNVIGDAIDGLGNLPKDGDNGMSIHRQAPRFEDLSTSSEVLFTGIKVIDLIEPYSKGGKIGLFGGAGVGKTVLIQELINNIAKGHGGLSVFAGVGERTREGNDLLREMLESGIIKYGDDFMHSMENGGWDLSKVDMPGMRESKATFVFGQMNEPPGARARVALSGLSIAEYFRDGAGSDQGKDVLFFVDNIFRFTQAGSEVSALLGRMPSAVGYQPTLATEMGAMQERITSTNKGSITSVQAVYVPADDLTDPAPATTFAHLDATTVLSRKIAELGIYPAVDPLDSTSRILTPQILGDEHYDCAQRVKEILQKYKQLQDIIAILGMEELSEEDKLSVSRARRVQRFLSQPFHVAEQFTGLKGVLVDIKDTIKGFNMIIDGELDHLPEAAFNLKGTIEEAIEAGEKMLAEA.

157 to 164 provides a ligand contact to ATP; the sequence is GGAGVGKT.

The protein belongs to the ATPase alpha/beta chains family. F-type ATPases have 2 components, CF(1) - the catalytic core - and CF(0) - the membrane proton channel. CF(1) has five subunits: alpha(3), beta(3), gamma(1), delta(1), epsilon(1). CF(0) has three main subunits: a(1), b(2) and c(9-12). The alpha and beta chains form an alternating ring which encloses part of the gamma chain. CF(1) is attached to CF(0) by a central stalk formed by the gamma and epsilon chains, while a peripheral stalk is formed by the delta and b chains.

It is found in the cell inner membrane. The catalysed reaction is ATP + H2O + 4 H(+)(in) = ADP + phosphate + 5 H(+)(out). Functionally, produces ATP from ADP in the presence of a proton gradient across the membrane. The catalytic sites are hosted primarily by the beta subunits. This Flavobacterium psychrophilum (strain ATCC 49511 / DSM 21280 / CIP 103535 / JIP02/86) protein is ATP synthase subunit beta.